We begin with the raw amino-acid sequence, 676 residues long: PAS domain-containing protein cky-1 (676 aa).

Over residues 45–72 the composition is skewed to low complexity; that stretch reads SALNNNSINVPNNNTMGMSSAGSSNGSN. Residues 45–89 form a disordered region; it reads SALNNNSINVPNNNTMGMSSAGSSNGSNLVNGQQRSTRGASKQRR. Residues 73-84 are compositionally biased toward polar residues; sequence LVNGQQRSTRGA. The segment at 76–89 is basic motif; it reads GQQRSTRGASKQRR. Residues 76–129 enclose the bHLH domain; that stretch reads GQQRSTRGASKQRRDQINVEIQKLRDLLPLSDLIKDRLFQLQVMSLGCIFIRKH. Residues 90–129 are helix-loop-helix motif; it reads DQINVEIQKLRDLLPLSDLIKDRLFQLQVMSLGCIFIRKH. The PAS domain maps to 165–215; that stretch reads MLMVTRSGKILHVSDNASEYLGHSVEEIMCQGDSIYDLVDGRDHGAVQAEL. Residues 436 to 462 are disordered; that stretch reads FSCQDSPPPSEEQQPSSPQTPPFTEQP.

Heterodimer; efficient DNA binding requires dimerization with another bHLH protein. Forms a heterodimer with ARNT homolog aha-1; binds DNA as heterodimer.

It is found in the nucleus. Functionally, transcription factor. Efficient DNA binding requires dimerization with another bHLH protein, such as ARNT homolog aha-1. Regulates transcription of target genes, probably acting in complex with aha-1. This Caenorhabditis elegans protein is PAS domain-containing protein cky-1.